The sequence spans 2240 residues: Cadherin-89D (2240 aa).

Cadherin domains follow at residues 70–179, 180–295, 296–411, 412–528, and 529–643; these read SEGV…APEF, LNVP…PPKF, TEGV…VPEF, EADY…TPKF, and EHGN…APYE. Residues N114, N119, N191, N278, N334, N417, N585, N720, N752, N822, N833, N983, N989, N1006, N1255, N1318, N1486, N1529, and N1556 are each glycosylated (N-linked (GlcNAc...) asparagine). Positions 814 to 844 are disordered; the sequence is MPSEPTSRNITMGSRFRSRNRSRSSKSKRRL. 5 Cadherin domains span residues 824–927, 928–1087, 1171–1284, 1285–1389, and 1411–1520; these read TMGS…APKF, NALT…APMF, TTKC…APTF, KKSW…RPEF, and MLPV…PPKS. Positions 829-844 are enriched in basic residues; the sequence is FRSRNRSRSSKSKRRL. 2 consecutive Cadherin domains span residues 1534–1660 and 1661–1774; these read QHAY…APKF and RGNG…MPVE. The helical transmembrane segment at 1884-1904 threads the bilayer; that stretch reads FVTVVLLALISLGALIAACCY. The Cytoplasmic portion of the chain corresponds to 1905–2240; it reads VCMRQKRRLW…LEFSKSNSLF (336 aa). Disordered stretches follow at residues 1930 to 1972 and 2121 to 2140; these read IAGI…PESV and AHLE…EDSL. The segment covering 1939–1952 has biased composition (basic residues); that stretch reads QKQRRQRQQRHTQR. The span at 1953–1964 shows a compositional bias: polar residues; it reads CSKGSTGSQRPT.

The protein resides in the cell membrane. Its function is as follows. Cadherins are calcium-dependent cell adhesion proteins. They preferentially interact with themselves in a homophilic manner in connecting cells. The chain is Cadherin-89D (Cad89D) from Drosophila melanogaster (Fruit fly).